Consider the following 106-residue polypeptide: Large ribosomal subunit protein uL24 (106 aa).

Belongs to the universal ribosomal protein uL24 family. In terms of assembly, part of the 50S ribosomal subunit.

One of two assembly initiator proteins, it binds directly to the 5'-end of the 23S rRNA, where it nucleates assembly of the 50S subunit. In terms of biological role, one of the proteins that surrounds the polypeptide exit tunnel on the outside of the subunit. This is Large ribosomal subunit protein uL24 from Acidovorax sp. (strain JS42).